Here is a 739-residue protein sequence, read N- to C-terminus: MANWCMSVLMFSFVTVYTIVTSLGQGIRRGFRAIVDEVENIYGDMCAGFKVALSKLSVSWIVVVGMIFVLNSLVVGLVPTLTMVAIIAACVGAKYGGRVPRYIRAHVDRIRKSWEKGVDDDDCCAPLPETSLERVPTKLRPRLACKIAVRAIAKVGLLKRSEANSMVYQRVCLDVMESMKMRWHDRLVILPQAVLACLERPEEVEEVMKAIEASCKGRFDVYXGCLLQHRGYNTAIISAIPDGVLLNHEGMVVRKGAPITTERKWYSFAGYASTYEYIVHNSSLVNVCRGLVERVFCVVRDGKLQRPLRPKNNVFERKLGNVGRRISSIVGYCPAMTRSEFCESYSGTRRATYERARLSLDVLPCTRKDAYLKTFVKAEKINITLKPDPAPRVIQPRDPRYNVEVGRYLKPLEPRLMKAIDKLWGEKTAIKGYTVEKVGEILHQKSLRFKNPCFVGLDASRFDQHCSRQALEWEHSVYNAIFRDPYLSELLTWQIDNVGTAYLKDGFVRYRVDGCRMSGDMNTSMGNYLIMSCLVYQFCKDIGIDASLANCGDDCVLYLEKEDLPKLKALPDWFGKMGYSMKVEKPVFTVEEIEFCQQHPVQLSRGYVMVRRPDVCLTKDLCVVRGGMTTERLQRWLYAQHDGGLALTGDCPVLGAFYRRFPSGESHGELSEYSDAHKFKAGKQYGEINSLARYSFWLAFGITPDEQLAIERDLMNWTPNVVPGSCDPRPTLLDYCSDN.

Residues 452–567 form the RdRp catalytic domain; that stretch reads PCFVGLDASR…YLEKEDLPKL (116 aa).

It belongs to the tombusviridae RNA polymerase family.

It carries out the reaction RNA(n) + a ribonucleoside 5'-triphosphate = RNA(n+1) + diphosphate. In terms of biological role, RNA-dependent RNA polymerase that plays an essential role in the virus replication. The protein is RNA-directed RNA polymerase of Pothos latent virus (isolate Pigeonpea/India) (PoLV).